Here is a 593-residue protein sequence, read N- to C-terminus: Isocitrate dehydrogenase kinase/phosphatase (593 aa).

ATP contacts are provided by residues 315-321 (APGIRGM) and Lys336. The active site involves Asp371.

This sequence belongs to the AceK family.

The protein resides in the cytoplasm. It carries out the reaction L-seryl-[isocitrate dehydrogenase] + ATP = O-phospho-L-seryl-[isocitrate dehydrogenase] + ADP + H(+). In terms of biological role, bifunctional enzyme which can phosphorylate or dephosphorylate isocitrate dehydrogenase (IDH) on a specific serine residue. This is a regulatory mechanism which enables bacteria to bypass the Krebs cycle via the glyoxylate shunt in response to the source of carbon. When bacteria are grown on glucose, IDH is fully active and unphosphorylated, but when grown on acetate or ethanol, the activity of IDH declines drastically concomitant with its phosphorylation. The protein is Isocitrate dehydrogenase kinase/phosphatase of Salmonella typhi.